The chain runs to 331 residues: Ketol-acid reductoisomerase (NADP(+)) (331 aa).

The 181-residue stretch at 2–182 (ARLYYDADAN…GGTRAGILET (181 aa)) folds into the KARI N-terminal Rossmann domain. NADP(+)-binding positions include 25 to 28 (YGSQ), Ser-51, Ser-53, and 83 to 86 (DEVQ). Residue His-108 is part of the active site. Gly-134 provides a ligand contact to NADP(+). The KARI C-terminal knotted domain occupies 183–328 (TFREETETDL…KDLRAMFSWL (146 aa)). Mg(2+)-binding residues include Asp-191, Glu-195, Glu-227, and Glu-231. Ser-252 serves as a coordination point for substrate.

This sequence belongs to the ketol-acid reductoisomerase family. Requires Mg(2+) as cofactor.

It catalyses the reaction (2R)-2,3-dihydroxy-3-methylbutanoate + NADP(+) = (2S)-2-acetolactate + NADPH + H(+). The enzyme catalyses (2R,3R)-2,3-dihydroxy-3-methylpentanoate + NADP(+) = (S)-2-ethyl-2-hydroxy-3-oxobutanoate + NADPH + H(+). It functions in the pathway amino-acid biosynthesis; L-isoleucine biosynthesis; L-isoleucine from 2-oxobutanoate: step 2/4. The protein operates within amino-acid biosynthesis; L-valine biosynthesis; L-valine from pyruvate: step 2/4. Its function is as follows. Involved in the biosynthesis of branched-chain amino acids (BCAA). Catalyzes an alkyl-migration followed by a ketol-acid reduction of (S)-2-acetolactate (S2AL) to yield (R)-2,3-dihydroxy-isovalerate. In the isomerase reaction, S2AL is rearranged via a Mg-dependent methyl migration to produce 3-hydroxy-3-methyl-2-ketobutyrate (HMKB). In the reductase reaction, this 2-ketoacid undergoes a metal-dependent reduction by NADPH to yield (R)-2,3-dihydroxy-isovalerate. This Cyanothece sp. (strain PCC 7425 / ATCC 29141) protein is Ketol-acid reductoisomerase (NADP(+)).